We begin with the raw amino-acid sequence, 542 residues long: Probable E3 ubiquitin-protein ligase ARI11 (542 aa).

A disordered region spans residues 1 to 25 (MSSSDRDIIDIESGEEDLYSDGGND). Positions 10-19 (DIESGEEDLY) are enriched in acidic residues. The tract at residues 135–342 (VDIQCGICFE…SDHKACNAFK (208 aa)) is TRIAD supradomain. Zn(2+)-binding residues include cysteine 139, cysteine 142, cysteine 156, histidine 158, cysteine 161, cysteine 164, cysteine 184, cysteine 189, cysteine 228, cysteine 233, cysteine 251, cysteine 253, cysteine 258, cysteine 261, histidine 266, cysteine 271, cysteine 298, and cysteine 301. The RING-type 1 zinc finger occupies 139-189 (CGICFESYTRKEIARVSCGHPYCKTCWTGYITTKIEDGPGCLRVKCPEPSC). The segment at 208–271 (DKYYRYFLRS…CEDAHSPVDC (64 aa)) adopts an IBR-type zinc-finger fold. The segment at 298–328 (CPKCKRPIEKNTGCNHMSCSAPCRHYFCWAC) adopts an RING-type 2; atypical zinc-finger fold. Cysteine 311 is a catalytic residue. 6 residues coordinate Zn(2+): cysteine 316, cysteine 320, cysteine 325, cysteine 328, histidine 335, and cysteine 338.

Belongs to the RBR family. Ariadne subfamily. It depends on Zn(2+) as a cofactor.

It catalyses the reaction [E2 ubiquitin-conjugating enzyme]-S-ubiquitinyl-L-cysteine + [acceptor protein]-L-lysine = [E2 ubiquitin-conjugating enzyme]-L-cysteine + [acceptor protein]-N(6)-ubiquitinyl-L-lysine.. It participates in protein modification; protein ubiquitination. Functionally, might act as an E3 ubiquitin-protein ligase, or as part of E3 complex, which accepts ubiquitin from specific E2 ubiquitin-conjugating enzymes and then transfers it to substrates. The protein is Probable E3 ubiquitin-protein ligase ARI11 (ARI11) of Arabidopsis thaliana (Mouse-ear cress).